The sequence spans 719 residues: Ferric reductase transmembrane component 4 (719 aa).

The first 18 residues, 1–18 (MLLVHIISFLLFFQLSAA), serve as a signal peptide directing secretion. The Extracellular segment spans residues 19–156 (KAPPSKTSLI…YGYYYNHDIP (138 aa)). N-linked (GlcNAc...) asparagine glycosylation is found at asparagine 51, asparagine 80, asparagine 101, asparagine 113, asparagine 127, and asparagine 135. The chain crosses the membrane as a helical span at residues 157-177 (YYFGGIICAYFVGVMLLAGLI). The Cytoplasmic segment spans residues 178 to 228 (RFLNYTPIKKIMFQQKLVNYVRGYTTLPTLYEKHAEPFSYLKVITGYLPTR). Residues 229 to 249 (FETLVILGYLILHTIFMAYKY) traverse the membrane as a helical segment. Residues 250–267 (QYDPYHIIFAAHRAEVAH) are Extracellular-facing. Residues 268–288 (FVAYRSGILSFAHLPLIVLFA) traverse the membrane as a helical segment. The Ferric oxidoreductase domain maps to 273 to 407 (SGILSFAHLP…SGIEWIYAAI (135 aa)). The Cytoplasmic portion of the chain corresponds to 289 to 304 (GRNNFLQLISGLKHTS). A helical membrane pass occupies residues 305–325 (FIVFHKWLGRMMFLDAIIHAA). Heme contacts are provided by histidine 309 and histidine 323. Residues 326–346 (GFTNYYLYYKKWNTVRLRVYW) are Extracellular-facing. The helical transmembrane segment at 347-367 (KFGIATTCLAGMLIFFSIAAF) threads the bilayer. Topologically, residues 368 to 373 (RRHYYE) are cytoplasmic. The helical transmembrane segment at 374 to 394 (TFMALHIVFAALFLYTCWEHV) threads the bilayer. Heme is bound by residues histidine 379 and histidine 393. Position 395 (threonine 395) is a topological domain, extracellular. The helical transmembrane segment at 396–416 (NFSGIEWIYAAIAIWGVDRIV) threads the bilayer. The 120-residue stretch at 408 to 527 (AIWGVDRIVR…EGPYGSKSTA (120 aa)) folds into the FAD-binding FR-type domain. At 417-719 (RITRIALLGF…IEYLEEYQAW (303 aa)) the chain is on the cytoplasmic side. 472–478 (HPFTVMD) is a binding site for FAD. 519–522 (GPYG) lines the NADP(+) pocket. Composition is skewed to polar residues over residues 606-618 (EKISSNEVKNGET) and 625-643 (SSLSNSEKAPSESENTELP). A disordered region spans residues 606 to 643 (EKISSNEVKNGETTAEKAPSSLSNSEKAPSESENTELP). Residue 685–686 (CG) coordinates NADP(+).

This sequence belongs to the ferric reductase (FRE) family. FAD is required as a cofactor.

The protein localises to the cell membrane. It catalyses the reaction 2 a Fe(II)-siderophore + NADP(+) + H(+) = 2 a Fe(III)-siderophore + NADPH. In terms of biological role, siderophore-iron reductase responsible for reducing extracellular iron prior to import. Catalyzes the reductive uptake of Fe(3+) bound to dihydroxamate rhodotorulic acid. Fe(3+) is reduced to Fe(2+), which then dissociates from the siderophore and can be imported by the high-affinity Fe(2+) transport complex in the plasma membrane. The polypeptide is Ferric reductase transmembrane component 4 (FRE4) (Saccharomyces cerevisiae (strain ATCC 204508 / S288c) (Baker's yeast)).